A 309-amino-acid chain; its full sequence is Large ribosomal subunit protein uL22m (309 aa).

A mitochondrion-targeting transit peptide spans 1–25 (MNFHTARISQVGVISRALLSSVSRR). The segment at 40 to 63 (SLFGSITENKPKEGKNRGDEDAGS) is disordered. Basic and acidic residues predominate over residues 48-59 (NKPKEGKNRGDE).

The protein belongs to the universal ribosomal protein uL22 family. Component of the mitochondrial large ribosomal subunit (mt-LSU). Mature yeast 74S mitochondrial ribosomes consist of a small (37S) and a large (54S) subunit. The 37S small subunit contains a 15S ribosomal RNA (15S mt-rRNA) and 34 different proteins. The 54S large subunit contains a 21S rRNA (21S mt-rRNA) and 46 different proteins. uL22m forms the wall of the exit tunnel.

Its subcellular location is the mitochondrion. Functionally, component of the mitochondrial ribosome (mitoribosome), a dedicated translation machinery responsible for the synthesis of mitochondrial genome-encoded proteins, including at least some of the essential transmembrane subunits of the mitochondrial respiratory chain. The mitoribosomes are attached to the mitochondrial inner membrane and translation products are cotranslationally integrated into the membrane. This is Large ribosomal subunit protein uL22m (MRPL22) from Saccharomyces cerevisiae (strain ATCC 204508 / S288c) (Baker's yeast).